The following is a 506-amino-acid chain: UPF0371 protein FN1121 (506 aa).

This sequence belongs to the UPF0371 family.

The sequence is that of UPF0371 protein FN1121 from Fusobacterium nucleatum subsp. nucleatum (strain ATCC 25586 / DSM 15643 / BCRC 10681 / CIP 101130 / JCM 8532 / KCTC 2640 / LMG 13131 / VPI 4355).